Reading from the N-terminus, the 557-residue chain is Dihydroxy-acid dehydratase (557 aa).

Position 49 (C49) interacts with [2Fe-2S] cluster. D81 contacts Mg(2+). C122 serves as a coordination point for [2Fe-2S] cluster. The Mg(2+) site is built by D123 and K124. K124 is modified (N6-carboxylysine). C194 contributes to the [2Fe-2S] cluster binding site. Residue E446 coordinates Mg(2+). Residue S472 is the Proton acceptor of the active site.

The protein belongs to the IlvD/Edd family. Homodimer. [2Fe-2S] cluster is required as a cofactor. Requires Mg(2+) as cofactor.

The enzyme catalyses (2R)-2,3-dihydroxy-3-methylbutanoate = 3-methyl-2-oxobutanoate + H2O. The catalysed reaction is (2R,3R)-2,3-dihydroxy-3-methylpentanoate = (S)-3-methyl-2-oxopentanoate + H2O. It participates in amino-acid biosynthesis; L-isoleucine biosynthesis; L-isoleucine from 2-oxobutanoate: step 3/4. Its pathway is amino-acid biosynthesis; L-valine biosynthesis; L-valine from pyruvate: step 3/4. Its function is as follows. Functions in the biosynthesis of branched-chain amino acids. Catalyzes the dehydration of (2R,3R)-2,3-dihydroxy-3-methylpentanoate (2,3-dihydroxy-3-methylvalerate) into 2-oxo-3-methylpentanoate (2-oxo-3-methylvalerate) and of (2R)-2,3-dihydroxy-3-methylbutanoate (2,3-dihydroxyisovalerate) into 2-oxo-3-methylbutanoate (2-oxoisovalerate), the penultimate precursor to L-isoleucine and L-valine, respectively. The polypeptide is Dihydroxy-acid dehydratase (Prochlorococcus marinus (strain MIT 9301)).